The following is a 456-amino-acid chain: Tyrosine phenol-lyase (456 aa).

N6-(pyridoxal phosphate)lysine is present on K257.

The protein belongs to the beta-eliminating lyase family. As to quaternary structure, homotetramer. Pyridoxal 5'-phosphate serves as cofactor. Post-translationally, contains L-DOPA (3',4'-dihydroxyphenylalanine).

Its subcellular location is the cytoplasm. It carries out the reaction L-tyrosine + H2O = phenol + pyruvate + NH4(+). The sequence is that of Tyrosine phenol-lyase (tpl) from Enterobacter agglomerans (Erwinia herbicola).